The following is a 301-amino-acid chain: UDP-N-acetylenolpyruvoylglucosamine reductase (301 aa).

Positions 30–194 constitute an FAD-binding PCMH-type domain; sequence VGGEPDYLVF…LSAKFALAPG (165 aa). The active site involves arginine 173. Serine 223 (proton donor) is an active-site residue. The active site involves glutamate 293.

The protein belongs to the MurB family. The cofactor is FAD.

The protein localises to the cytoplasm. The enzyme catalyses UDP-N-acetyl-alpha-D-muramate + NADP(+) = UDP-N-acetyl-3-O-(1-carboxyvinyl)-alpha-D-glucosamine + NADPH + H(+). The protein operates within cell wall biogenesis; peptidoglycan biosynthesis. Its function is as follows. Cell wall formation. The chain is UDP-N-acetylenolpyruvoylglucosamine reductase from Streptococcus pneumoniae (strain CGSP14).